The primary structure comprises 626 residues: Nuclear RNA export factor 1 (626 aa).

Residues 1–16 (MADEGKSYSEHDDERV) are compositionally biased toward basic and acidic residues. Positions 1-85 (MADEGKSYSE…TTRPNRRGDA (85 aa)) are disordered. A2 bears the N-acetylalanine mark. The interval 2–60 (ADEGKSYSEHDDERVNFPQRKKKGRGPFRWKYGEGNRRSGRGGSGIRSSRLEEDDGDVA) is minor non-specific RNA-binding. Positions 2-118 (ADEGKSYSEH…GTSQDGTSKN (117 aa)) are RNA-binding (RBD). Residues 2–198 (ADEGKSYSEH…IIINPSAPPH (197 aa)) form an interaction with ALYREF/THOC4 and LUZP4 region. Phosphoserine is present on S9. Positions 20–29 (QRKKKGRGPF) are enriched in basic residues. Residue R42 is modified to Asymmetric dimethylarginine; alternate. At R42 the chain carries Omega-N-methylarginine; alternate. The interval 61–118 (MSDAQDGPRVRYNPYTTRPNRRGDAWHDRDRIHVTVRRDRAPPERGGAGTSQDGTSKN) is major non-specific RNA-binding. The tract at residues 61–118 (MSDAQDGPRVRYNPYTTRPNRRGDAWHDRDRIHVTVRRDRAPPERGGAGTSQDGTSKN) is RNA binding. The Nuclear localization signal signature appears at 67–100 (GPRVRYNPYTTRPNRRGDAWHDRDRIHVTVRRDR). The Nuclear export signal signature appears at 83-110 (GDAWHDRDRIHVTVRRDRAPPERGGAGT). Residues 119–198 (WFKITIPYGR…IIINPSAPPH (80 aa)) enclose the RRM domain. Position 126 is a 3'-nitrotyrosine (Y126). LRR repeat units lie at residues 266–291 (ELLS…QKVP), 292–315 (NLKI…IKGL), 316–350 (KLEE…AIRE), and 351–378 (RFPK…TTLP). Residues 393–543 (LVLHFLQQYY…LCIVNDELFV (151 aa)) form the NTF2 domain. The region spanning 572-626 (PEQQEMLQAFSTQSGMNLEWSQKCLQDNNWDYTRSAQAFTHLKAKGEIPEVAFMK) is the TAP-C domain.

This sequence belongs to the NXF family. In terms of assembly, heterodimer (via NTF2 domain) with NXT1. The formation of NXF1-NXT1 heterodimers is required for the NXF1-mediated nuclear mRNA export. Forms a complex with RANBP2/NUP358, NXT1 and RANGAP1. Associates with the exon junction complex (EJC) and with the transcription/export (TREX) complex. Found in a mRNA complex with UPF3A and UPF3B. Found in a post-splicing complex with RBM8A, UPF1, UPF2, UPF3A, UPF3B and RNPS1. Interacts (via N-terminus) with DHX9 (via N-terminus); this interaction is direct and negatively regulates NXF1-mediated nuclear export of constitutive transport element (CTE)-containing cellular mRNAs. Interacts with ALYREF/THOC4. Interacts with FYTTD1/UIF. Interacts with EIF4A3. Interacts with NUPL2. Interacts with THOC5. Interacts with CHTOP. Interacts with FRG1 (via N-terminus). Interacts with LUZP4. Interacts with FMR1; the interaction occurs in a mRNA-dependent and polyribosomes-independent manner in the nucleus. Interacts with CPSF6 (via N-terminus); this interaction is direct. Interacts with RBM15. Interacts with RBM15B. Interacts with MCM3AP; this interaction is not mediated by RNA.

Its subcellular location is the nucleus. The protein resides in the nucleoplasm. The protein localises to the nucleus speckle. It localises to the cytoplasm. Functionally, involved in the nuclear export of mRNA species bearing retroviral constitutive transport elements (CTE) and in the export of mRNA from the nucleus to the cytoplasm (TAP/NFX1 pathway). The NXF1-NXT1 heterodimer is involved in the export of HSP70 mRNA in conjunction with ALYREF/THOC4 and THOC5 components of the TREX complex. ALYREF/THOC4-bound mRNA is thought to be transferred to the NXF1-NXT1 heterodimer for export. Also involved in nuclear export of m6A-containing mRNAs: interaction between SRSF3 and YTHDC1 facilitates m6A-containing mRNA-binding to both SRSF3 and NXF1, promoting mRNA nuclear export. In Pongo abelii (Sumatran orangutan), this protein is Nuclear RNA export factor 1 (NXF1).